Here is a 1042-residue protein sequence, read N- to C-terminus: Kinesin-like protein KIN-5A (1042 aa).

Residues 1 to 14 (MDSNNSKKGSSVKS) are compositionally biased toward low complexity. The segment at 1–45 (MDSNNSKKGSSVKSPCQTPRSTEKSNRDFRVDSNSNSNPVSKNEK) is disordered. A compositionally biased stretch (basic and acidic residues) spans 21–31 (STEKSNRDFRV). Residues 32–41 (DSNSNSNPVS) show a composition bias toward polar residues. The Kinesin motor domain occupies 50-392 (NIQVIVRCRP…LDYAHRAKHI (343 aa)). Residue 136 to 143 (GQTGTGKT) participates in ATP binding. Positions 480-517 (TAGLREKLDKTEKKLYETEQALLDLEEKHRQAVATIKE) form a coiled coil. A disordered region spans residues 1021–1042 (KQMQNGEAKHVSNGRPPLTAIN).

It belongs to the TRAFAC class myosin-kinesin ATPase superfamily. Kinesin family. KIN-5/BimC subfamily.

The protein resides in the cytoplasm. Its subcellular location is the cytoskeleton. It localises to the spindle. Responsible for microtubule translocation. May be important for the organization of phragmoplast-specific arrays of microtubules. Plays an essential role in stabilizing the mitotic spindle. Required during mitotic cytokinesis. This Arabidopsis thaliana (Mouse-ear cress) protein is Kinesin-like protein KIN-5A.